The following is a 138-amino-acid chain: Phosphoribosyl-AMP cyclohydrolase (138 aa).

Residue Asp-84 coordinates Mg(2+). Cys-85 provides a ligand contact to Zn(2+). 2 residues coordinate Mg(2+): Asp-86 and Asp-88. Residues Cys-102 and Cys-109 each contribute to the Zn(2+) site.

This sequence belongs to the PRA-CH family. As to quaternary structure, homodimer. It depends on Mg(2+) as a cofactor. Requires Zn(2+) as cofactor.

It localises to the cytoplasm. It carries out the reaction 1-(5-phospho-beta-D-ribosyl)-5'-AMP + H2O = 1-(5-phospho-beta-D-ribosyl)-5-[(5-phospho-beta-D-ribosylamino)methylideneamino]imidazole-4-carboxamide. The protein operates within amino-acid biosynthesis; L-histidine biosynthesis; L-histidine from 5-phospho-alpha-D-ribose 1-diphosphate: step 3/9. In terms of biological role, catalyzes the hydrolysis of the adenine ring of phosphoribosyl-AMP. The protein is Phosphoribosyl-AMP cyclohydrolase of Burkholderia multivorans (strain ATCC 17616 / 249).